A 595-amino-acid chain; its full sequence is UvrABC system protein C (595 aa).

The GIY-YIG domain maps to 14-91; it reads SNPGCYLHKD…IQENMPKFNI (78 aa). A UVR domain is found at 196-231; the sequence is DKIVNQLKAKMKDMSDQMAFERAAEYRDLIEAVSTL.

The protein belongs to the UvrC family. As to quaternary structure, interacts with UvrB in an incision complex.

The protein resides in the cytoplasm. Its function is as follows. The UvrABC repair system catalyzes the recognition and processing of DNA lesions. UvrC both incises the 5' and 3' sides of the lesion. The N-terminal half is responsible for the 3' incision and the C-terminal half is responsible for the 5' incision. The sequence is that of UvrABC system protein C from Streptococcus thermophilus (strain ATCC BAA-491 / LMD-9).